Here is a 210-residue protein sequence, read N- to C-terminus: Large ribosomal subunit protein bL25 (210 aa).

The tract at residues 175 to 210 (IATILPPQQEEEIDSGEQQEAGQPDAAEGRETTPEE) is disordered. Basic and acidic residues predominate over residues 201 to 210 (AEGRETTPEE).

Belongs to the bacterial ribosomal protein bL25 family. CTC subfamily. Part of the 50S ribosomal subunit; part of the 5S rRNA/L5/L18/L25 subcomplex. Contacts the 5S rRNA. Binds to the 5S rRNA independently of L5 and L18.

In terms of biological role, this is one of the proteins that binds to the 5S RNA in the ribosome where it forms part of the central protuberance. The polypeptide is Large ribosomal subunit protein bL25 (Geobacillus kaustophilus (strain HTA426)).